The chain runs to 148 residues: Glutamate mutase sigma subunit (148 aa).

One can recognise a B12-binding domain in the interval 3–140; the sequence is NPTIVIGVIG…KRDIERVMQS (138 aa). Residues 13 to 17, histidine 16, 61 to 63, and 93 to 97 contribute to the adenosylcob(III)alamin site; these read ADCHA, SSI, and NLVIG.

Belongs to the methylaspartate mutase GlmS subunit family. Heterotetramer composed of 2 epsilon subunits (GlmE) and 2 sigma subunits (GlmS). GlmE exists as a homodimer and GlmS as a monomer. Adenosylcob(III)alamin is required as a cofactor.

It carries out the reaction (2S,3S)-3-methyl-L-aspartate = L-glutamate. It functions in the pathway amino-acid degradation; L-glutamate degradation via mesaconate pathway; acetate and pyruvate from L-glutamate: step 1/4. Functionally, catalyzes the carbon skeleton rearrangement of L-glutamate to L-threo-3-methylaspartate ((2S,3S)-3-methylaspartate). This Yersinia enterocolitica serotype O:8 / biotype 1B (strain NCTC 13174 / 8081) protein is Glutamate mutase sigma subunit.